A 97-amino-acid chain; its full sequence is Large ribosomal subunit protein bL27 (97 aa).

The segment covering Met1–Gln10 has biased composition (polar residues). Positions Met1 to Phe12 are excised as a propeptide. Residues Met1–Asp38 are disordered.

This sequence belongs to the bacterial ribosomal protein bL27 family. The N-terminus is cleaved by ribosomal processing cysteine protease Prp.

The chain is Large ribosomal subunit protein bL27 from Streptococcus equi subsp. zooepidemicus (strain H70).